The sequence spans 202 residues: Biogenesis of lysosome-related organelles complex 1 subunit 3 (202 aa).

The span at 1–11 shows a compositional bias: basic residues; it reads MASQGRRRRPL. Residues 1–82 form a disordered region; it reads MASQGRRRRP…PTAAPRDLPP (82 aa). Positions 41 to 55 are enriched in low complexity; that stretch reads LGPSGPTRGRPTGLR. Acidic residues predominate over residues 61–71; sequence AETDSEPEPEP. Phosphothreonine is present on T63. Phosphoserine is present on S65.

This sequence belongs to the BLOC1S3 family. As to quaternary structure, interacts with BLOC1S4, BLOC1S5 and BLOC1S6. Component of the biogenesis of lysosome-related organelles complex 1 (BLOC-1) composed of BLOC1S1, BLOC1S2, BLOC1S3, BLOC1S4, BLOC1S5, BLOC1S6, DTNBP1/BLOC1S7 and SNAPIN/BLOC1S8. Octamer composed of one copy each BLOC1S1, BLOC1S2, BLOC1S3, BLOC1S4, BLOC1S5, BLOC1S6, DTNBP1/BLOC1S7 and SNAPIN/BLOC1S8. The BLOC-1 complex associates with the AP-3 protein complex and membrane protein cargos. Interacts directly with BLOC1S2.

It localises to the cytoplasm. Its function is as follows. Component of the BLOC-1 complex, a complex that is required for normal biogenesis of lysosome-related organelles (LRO), such as platelet dense granules and melanosomes. In concert with the AP-3 complex, the BLOC-1 complex is required to target membrane protein cargos into vesicles assembled at cell bodies for delivery into neurites and nerve terminals. The BLOC-1 complex, in association with SNARE proteins, is also proposed to be involved in neurite extension. Plays a role in intracellular vesicle trafficking. In Homo sapiens (Human), this protein is Biogenesis of lysosome-related organelles complex 1 subunit 3 (BLOC1S3).